The sequence spans 153 residues: 1,4-dihydroxy-2-naphthoyl-CoA hydrolase (153 aa).

Residue Asp21 is part of the active site.

Belongs to the 4-hydroxybenzoyl-CoA thioesterase family. DHNA-CoA hydrolase subfamily.

It catalyses the reaction 1,4-dihydroxy-2-naphthoyl-CoA + H2O = 1,4-dihydroxy-2-naphthoate + CoA + H(+). The protein operates within cofactor biosynthesis; phylloquinone biosynthesis. It functions in the pathway quinol/quinone metabolism; 1,4-dihydroxy-2-naphthoate biosynthesis; 1,4-dihydroxy-2-naphthoate from chorismate: step 7/7. Catalyzes the hydrolysis of 1,4-dihydroxy-2-naphthoyl-CoA (DHNA-CoA) to 1,4-dihydroxy-2-naphthoate (DHNA), a reaction involved in phylloquinone (vitamin K1) biosynthesis. In Synechococcus sp. (strain WH7803), this protein is 1,4-dihydroxy-2-naphthoyl-CoA hydrolase.